Reading from the N-terminus, the 280-residue chain is F-box only protein 27 (280 aa).

In terms of domain architecture, F-box spans 20 to 67 (VLDLSRLPPELLLLVLSHVPPRTLLMHCRRVCRAWRALVDGQALWLLL). The region spanning 101–277 (FCALRPLGRN…VTNSSVIIRV (177 aa)) is the FBA domain.

As to quaternary structure, part of a SCF (SKP1-cullin-F-box) protein ligase complex. Interacts with SKP1 and CUL1. Detected in brain, heart and muscle.

In terms of biological role, substrate-recognition component of the SCF (SKP1-CUL1-F-box protein)-type E3 ubiquitin ligase complex. Able to recognize and bind complex-type oligosaccharides. The chain is F-box only protein 27 (Fbxo27) from Mus musculus (Mouse).